The primary structure comprises 265 residues: Phosphonates import ATP-binding protein PhnC (265 aa).

One can recognise an ABC transporter domain in the interval 3 to 247 (LRLKQAFLHH…MLDTLYANEQ (245 aa)). 36–43 (GPSGAGKS) is an ATP binding site.

Belongs to the ABC transporter superfamily. Phosphonates importer (TC 3.A.1.9.1) family. In terms of assembly, the complex is composed of two ATP-binding proteins (PhnC), two transmembrane proteins (PhnE) and a solute-binding protein (PhnD).

The protein localises to the cell inner membrane. The enzyme catalyses phosphonate(out) + ATP + H2O = phosphonate(in) + ADP + phosphate + H(+). Its function is as follows. Part of the ABC transporter complex PhnCDE involved in phosphonates import. Responsible for energy coupling to the transport system. In Pseudomonas fluorescens (strain Pf0-1), this protein is Phosphonates import ATP-binding protein PhnC.